We begin with the raw amino-acid sequence, 676 residues long: ATP-dependent zinc metalloprotease FtsH (676 aa).

The Cytoplasmic portion of the chain corresponds to 1–12 (MSFFDKIFKKFH). A helical membrane pass occupies residues 13-33 (MGVLYFAVILIGATFIYCYFT). At 34 to 115 (KHEKKDNNTF…DPRPWNGYEH (82 aa)) the chain is on the extracellular side. A helical transmembrane segment spans residues 116–136 (VFWVFRQCLTMLFFYCFFLFF). At 137–676 (ADTIKQMGQE…EVLSTDSEQT (540 aa)) the chain is on the cytoplasmic side. 212–219 (GPPGTGKT) is an ATP binding site. His-433 is a binding site for Zn(2+). Glu-434 is a catalytic residue. His-437 and Asp-509 together coordinate Zn(2+). The tract at residues 610–676 (EKEETNAPTQ…EVLSTDSEQT (67 aa)) is disordered. The segment covering 615 to 636 (NAPTQTTSQMSSNNETTNTDKT) has biased composition (polar residues). Residues 650–667 (NQESNESNPNNNEKASPE) show a composition bias toward low complexity.

It in the central section; belongs to the AAA ATPase family. In the C-terminal section; belongs to the peptidase M41 family. In terms of assembly, homohexamer. Zn(2+) is required as a cofactor.

The protein resides in the cell membrane. Acts as a processive, ATP-dependent zinc metallopeptidase for both cytoplasmic and membrane proteins. Plays a role in the quality control of integral membrane proteins. This chain is ATP-dependent zinc metalloprotease FtsH, found in Aster yellows witches'-broom phytoplasma (strain AYWB).